A 145-amino-acid chain; its full sequence is Immunity protein CdiI (145 aa).

In terms of assembly, interacts with cognate toxin fragment CdiA-CT.

In terms of biological role, immunity protein component of a toxin-immunity protein module, which functions as a cellular contact-dependent growth inhibition (CDI) system. CDI modules allow bacteria to communicate with and inhibit the growth of closely related neighboring bacteria in a contact-dependent fashion. Protects cells against the 16S rRNase activity of CdiA-CT, its cognate toxin protein, but not against the toxic effects of a similar rRNase, non-cognate CdiA-CT from E.chrysanthemi strain EC16. In Enterobacter cloacae subsp. cloacae (strain ATCC 13047 / DSM 30054 / NBRC 13535 / NCTC 10005 / WDCM 00083 / NCDC 279-56), this protein is Immunity protein CdiI.